Reading from the N-terminus, the 312-residue chain is Ribonuclease HIII (312 aa).

The RNase H type-2 domain occupies 95 to 311 (FNCIGSDEAG…REKAQKILKP (217 aa)). A divalent metal cation-binding residues include D101, E102, and D206.

This sequence belongs to the RNase HII family. RnhC subfamily. Mn(2+) serves as cofactor. Mg(2+) is required as a cofactor.

The protein localises to the cytoplasm. The catalysed reaction is Endonucleolytic cleavage to 5'-phosphomonoester.. Endonuclease that specifically degrades the RNA of RNA-DNA hybrids. The chain is Ribonuclease HIII from Staphylococcus aureus (strain USA300).